A 401-amino-acid chain; its full sequence is Tryptophan synthase beta chain (401 aa).

K91 bears the N6-(pyridoxal phosphate)lysine mark.

Belongs to the TrpB family. In terms of assembly, tetramer of two alpha and two beta chains. Pyridoxal 5'-phosphate serves as cofactor.

The enzyme catalyses (1S,2R)-1-C-(indol-3-yl)glycerol 3-phosphate + L-serine = D-glyceraldehyde 3-phosphate + L-tryptophan + H2O. Its pathway is amino-acid biosynthesis; L-tryptophan biosynthesis; L-tryptophan from chorismate: step 5/5. In terms of biological role, the beta subunit is responsible for the synthesis of L-tryptophan from indole and L-serine. The polypeptide is Tryptophan synthase beta chain (Lactococcus lactis subsp. cremoris (strain SK11)).